A 357-amino-acid polypeptide reads, in one-letter code: Protein-glutamate methylesterase/protein-glutamine glutaminase (357 aa).

In terms of domain architecture, Response regulatory spans 3–120; it reads RVLVVDDSAF…SLDLYKIKEQ (118 aa). Asp-54 bears the 4-aspartylphosphate mark. Residues 161–355 form the CheB-type methylesterase domain; that stretch reads PGTGRQIVCI…ASITSCVKKE (195 aa). Active-site residues include Ser-173, His-200, and Asp-296.

Belongs to the CheB family. Post-translationally, phosphorylated by CheA. Phosphorylation of the N-terminal regulatory domain activates the methylesterase activity.

The protein resides in the cytoplasm. It carries out the reaction [protein]-L-glutamate 5-O-methyl ester + H2O = L-glutamyl-[protein] + methanol + H(+). It catalyses the reaction L-glutaminyl-[protein] + H2O = L-glutamyl-[protein] + NH4(+). Functionally, involved in the modulation of the chemotaxis system; catalyzes the demethylation of specific methylglutamate residues introduced into the chemoreceptors (methyl-accepting chemotaxis proteins) by CheR. B.subtilis has an effective methylation-independent adaptation system but must utilize the methylation system for adaptation to high concentrations of attractant. This chain is Protein-glutamate methylesterase/protein-glutamine glutaminase, found in Bacillus subtilis (strain 168).